The primary structure comprises 656 residues: Protein terminal ear1 (656 aa).

Residues 211 to 283 (SLVVLSPLPG…RRLVVEFTRP (73 aa)) enclose the RRM domain. Disordered stretches follow at residues 280 to 408 (FTRP…WKGR) and 576 to 656 (LTDP…GYDD). Over residues 288–299 (PRRRGYAPHQHR) the composition is skewed to basic residues. Residues 314–331 (PSQPTSSQPPASSSSSGS) show a composition bias toward low complexity. The segment covering 346 to 358 (CKSSAGSDQSSKG) has biased composition (polar residues). Composition is skewed to low complexity over residues 377–397 (AAAA…QKGV), 585–601 (RSPA…SRAA), and 612–630 (PAPS…STHA). Basic and acidic residues predominate over residues 642–656 (DIRLAGELRRLGYDD).

Expressed below the shoot tip down the flanks of shoot apex in an alternating pattern. Not expressed in root tips, leaves or immature ears (female inflorescences).

Probable RNA-binding protein. Involved in the regulation of leaf initiation rate and shoot development. Seems to act more predominantly in the early stages of the leaf development, rather than in the later phase. This Zea mays (Maize) protein is Protein terminal ear1 (TE1).